A 1202-amino-acid chain; its full sequence is Nucleolar protein 6 (1202 aa).

A disordered region spans residues 1–64 (MNKTKRKQQS…KKYKDNETNK (64 aa)).

This sequence belongs to the NRAP family. Part of the small subunit (SSU) processome, composed of more than 70 proteins and the RNA chaperone small nucleolar RNA (snoRNA) U3.

The protein localises to the nucleus. It localises to the nucleolus. The protein resides in the chromosome. Functionally, part of the small subunit (SSU) processome, first precursor of the small eukaryotic ribosomal subunit. During the assembly of the SSU processome in the nucleolus, many ribosome biogenesis factors, an RNA chaperone and ribosomal proteins associate with the nascent pre-rRNA and work in concert to generate RNA folding, modifications, rearrangements and cleavage as well as targeted degradation of pre-ribosomal RNA by the RNA exosome. In Drosophila willistoni (Fruit fly), this protein is Nucleolar protein 6.